The following is a 101-amino-acid chain: Trp operon repressor homolog (101 aa).

The DNA-binding element occupies 59–82 (QREIQQNLSTSAATITRGSNMLKM).

Belongs to the TrpR family. In terms of assembly, homodimer.

It localises to the cytoplasm. Its function is as follows. This protein is an aporepressor. When complexed with L-tryptophan it binds the operator region of the trp operon and prevents the initiation of transcription. The polypeptide is Trp operon repressor homolog (Actinobacillus succinogenes (strain ATCC 55618 / DSM 22257 / CCUG 43843 / 130Z)).